A 331-amino-acid chain; its full sequence is Probable deacetylase MTH_1194 (331 aa).

Catalysis depends on histidine 118, which acts as the Proton donor/acceptor. Residues aspartate 155, histidine 157, and aspartate 244 each coordinate Zn(2+).

The protein belongs to the histone deacetylase family. It depends on Zn(2+) as a cofactor.

Functionally, probable deacetylase. This is Probable deacetylase MTH_1194 from Methanothermobacter thermautotrophicus (strain ATCC 29096 / DSM 1053 / JCM 10044 / NBRC 100330 / Delta H) (Methanobacterium thermoautotrophicum).